The chain runs to 180 residues: GTP cyclohydrolase 1 (180 aa).

Residues C71, H74, and C142 each coordinate Zn(2+).

The protein belongs to the GTP cyclohydrolase I family. As to quaternary structure, toroid-shaped homodecamer, composed of two pentamers of five dimers.

The enzyme catalyses GTP + H2O = 7,8-dihydroneopterin 3'-triphosphate + formate + H(+). It participates in cofactor biosynthesis; 7,8-dihydroneopterin triphosphate biosynthesis; 7,8-dihydroneopterin triphosphate from GTP: step 1/1. The chain is GTP cyclohydrolase 1 from Helicobacter pylori (strain HPAG1).